The following is a 128-amino-acid chain: Ribosome-binding factor A (128 aa).

Belongs to the RbfA family. In terms of assembly, monomer. Binds 30S ribosomal subunits, but not 50S ribosomal subunits or 70S ribosomes.

Its subcellular location is the cytoplasm. One of several proteins that assist in the late maturation steps of the functional core of the 30S ribosomal subunit. Associates with free 30S ribosomal subunits (but not with 30S subunits that are part of 70S ribosomes or polysomes). Required for efficient processing of 16S rRNA. May interact with the 5'-terminal helix region of 16S rRNA. The protein is Ribosome-binding factor A of Microcystis aeruginosa (strain NIES-843 / IAM M-2473).